The primary structure comprises 353 residues: O-antigen biosynthesis glycosyltransferase WclY (353 aa).

Residues 116-136 form a helical membrane-spanning segment; the sequence is SLIWGLLWCSIWLFFDKLVIL. UDP is bound by residues asparagine 190 and glutamate 271. The short motif at 263–271 is the E(x7)E glycosyltransferase motif element; it reads EGFGLTVLE.

This sequence belongs to the glycosyltransferase group 1 family. Glycosyltransferase 4 subfamily.

Its subcellular location is the membrane. It participates in bacterial outer membrane biogenesis; LPS O-antigen biosynthesis. Involved in the assembly of the O-repeating unit during O-antigen biosynthesis. N-acetylglucosamine transferase accountable for the alpha-D-GlcNAc-1,4-beta-D-Gal linkage within the O-antigen. The protein is O-antigen biosynthesis glycosyltransferase WclY of Escherichia coli.